The following is a 1377-amino-acid chain: DNA-directed RNA polymerase subunit beta (1377 aa).

Belongs to the RNA polymerase beta chain family. In terms of assembly, the RNAP catalytic core consists of 2 alpha, 1 beta, 1 beta' and 1 omega subunit. When a sigma factor is associated with the core the holoenzyme is formed, which can initiate transcription.

It carries out the reaction RNA(n) + a ribonucleoside 5'-triphosphate = RNA(n+1) + diphosphate. DNA-dependent RNA polymerase catalyzes the transcription of DNA into RNA using the four ribonucleoside triphosphates as substrates. This chain is DNA-directed RNA polymerase subunit beta, found in Brucella canis (strain ATCC 23365 / NCTC 10854 / RM-666).